The chain runs to 107 residues: HASRATDGKKRRKRRKESYGIYIYKVLKQVHPDTGISSRAMSIMNSFVNDVFERIAGEASRLAQYNKKSTISSREVQTAVRLLLPGELAKHAVSEGTKAVTKYTTSK.

An O-linked (GlcNAc) serine glycan is attached at Ser-94. A Glycyl lysine isopeptide (Lys-Gly) (interchain with G-Cter in ubiquitin) cross-link involves residue Lys-102.

It belongs to the histone H2B family. As to quaternary structure, the nucleosome is a histone octamer containing two molecules each of H2A, H2B, H3 and H4 assembled in one H3-H4 heterotetramer and two H2A-H2B heterodimers. The octamer wraps approximately 147 bp of DNA. Post-translationally, monoubiquitination gives a specific tag for epigenetic transcriptional activation and is also prerequisite for histone H3 'Lys-4' and 'Lys-79' methylation. In terms of processing, glcNAcylation at Ser-94 promotes monoubiquitination of Lys-102. It fluctuates in response to extracellular glucose, and associates with transcribed genes.

The protein localises to the nucleus. The protein resides in the chromosome. Its function is as follows. Core component of nucleosome. Nucleosomes wrap and compact DNA into chromatin, limiting DNA accessibility to the cellular machineries which require DNA as a template. Histones thereby play a central role in transcription regulation, DNA repair, DNA replication and chromosomal stability. DNA accessibility is regulated via a complex set of post-translational modifications of histones, also called histone code, and nucleosome remodeling. This is Late histone H2B.L4 from Strongylocentrotus purpuratus (Purple sea urchin).